Consider the following 101-residue polypeptide: UPF0235 protein CJA_0091 (101 aa).

It belongs to the UPF0235 family.

This Cellvibrio japonicus (strain Ueda107) (Pseudomonas fluorescens subsp. cellulosa) protein is UPF0235 protein CJA_0091.